Here is a 187-residue protein sequence, read N- to C-terminus: HTH-type dhaKLM operon transcriptional activator DhaS (187 aa).

Positions 12–72 (IITQKIIAKA…WIFENDFAEL (61 aa)) constitute an HTH tetR-type domain. A DNA-binding region (H-T-H motif) is located at residues 35–54 (SVSDIMQTAKIRRQTFYNYF).

As to quaternary structure, homodimer. Interacts with a homodimer of DhaQ.

In complex with DhaQ, upon activation by dihydroxyacetone, activates transcription of the dhaKLM operon. Binds the inverted repeat sequence 5'-GGACACATN(6)ATTTGTCC-3' located upstream of and partially overlapping with the -35 promoter sequence of the dhaKLM operon promoter. The polypeptide is HTH-type dhaKLM operon transcriptional activator DhaS (dhaS) (Lactococcus lactis subsp. lactis (strain IL1403) (Streptococcus lactis)).